The chain runs to 507 residues: Tyrosine protein-kinase src-2 (507 aa).

Basic and acidic residues predominate over residues 1 to 10; the sequence is MGSCIGKEDP. The disordered stretch occupies residues 1–52; the sequence is MGSCIGKEDPPPGATSPVHTSSTLGRESLPSHPRIPSIGPIAASSSGNTIDK. A lipid anchor (N-myristoyl glycine) is attached at Gly2. Residues 35-47 are compositionally biased toward low complexity; it reads IPSIGPIAASSSG. Residues 57–118 form the SH3 domain; it reads SQSANFVALF…PSNYVAREKS (62 aa). The SH2 domain maps to 124–216; the sequence is WYFGKMRRID…GLCVNLGAPC (93 aa). In terms of domain architecture, Protein kinase spans 240 to 494; sequence VRLIRQIGAG…LQWKLEDLFN (255 aa). Residues 246–254 and Lys268 each bind ATP; that span reads IGAGQFGEV. The active-site Proton acceptor is the Asp358. At Tyr500 the chain carries Phosphotyrosine.

This sequence belongs to the protein kinase superfamily. Tyr protein kinase family. SRC subfamily. Mg(2+) serves as cofactor. Requires Mn(2+) as cofactor. Post-translationally, may be phosphorylated on Tyr-500 by csk-1. As to expression, expressed in vulva, cells around anus and pharyngeal muscles.

The catalysed reaction is L-tyrosyl-[protein] + ATP = O-phospho-L-tyrosyl-[protein] + ADP + H(+). May be inhibited by csk-1-mediated phosphorylation at Tyr-500. Functionally, non-receptor tyrosine-protein kinase which may play a role in larval and pharynx development. Unlike src-1, does not play a role in embryonic development. In Caenorhabditis elegans, this protein is Tyrosine protein-kinase src-2.